We begin with the raw amino-acid sequence, 239 residues long: Octanoyltransferase (239 aa).

Positions 59–239 constitute a BPL/LPL catalytic domain; sequence PFSPQAVWLL…KRRFKLNWEK (181 aa). Substrate-binding positions include 101–108, 168–170, and 181–183; these read RGGEVTHH, SIG, and GFS. Residue cysteine 199 is the Acyl-thioester intermediate of the active site.

The protein belongs to the LipB family.

It localises to the cytoplasm. The catalysed reaction is octanoyl-[ACP] + L-lysyl-[protein] = N(6)-octanoyl-L-lysyl-[protein] + holo-[ACP] + H(+). It participates in protein modification; protein lipoylation via endogenous pathway; protein N(6)-(lipoyl)lysine from octanoyl-[acyl-carrier-protein]: step 1/2. In terms of biological role, catalyzes the transfer of endogenously produced octanoic acid from octanoyl-acyl-carrier-protein onto the lipoyl domains of lipoate-dependent enzymes. Lipoyl-ACP can also act as a substrate although octanoyl-ACP is likely to be the physiological substrate. The protein is Octanoyltransferase of Prochlorococcus marinus (strain NATL2A).